The chain runs to 312 residues: Mas-related G-protein coupled receptor member B3 (312 aa).

Topologically, residues 1-31 (MALRTSLITTTAPDKTSLPISICIIKFQVMN) are extracellular. A helical membrane pass occupies residues 32 to 52 (LLSITISPVGMVLNIIVLWFL). At 53–67 (GFQICRNAFSAYILN) the chain is on the cytoplasmic side. The chain crosses the membrane as a helical span at residues 68-88 (LAVADFLFLCSHSIFSFLIVC). The Extracellular segment spans residues 89–106 (KLHYFLFYIRQLLDTVTM). Residues 107–127 (FAYVFGLSITTIISIECCLSI) form a helical membrane-spanning segment. The Cytoplasmic portion of the chain corresponds to 128 to 140 (MWPIWYHCQRPRH). The helical transmembrane segment at 141–161 (TSAVICVLLWALSLLFPALQM) threads the bilayer. Residues 162 to 180 (EKCSVLFNTFEYSWCGIIN) are Extracellular-facing. A helical transmembrane segment spans residues 181 to 201 (IISGAWLVVLFVVLCGFSLIL). Residues 202–220 (LLRISCGSQQIPVTRLNVT) lie on the Cytoplasmic side of the membrane. A helical transmembrane segment spans residues 221 to 241 (IALRVLLLLIFGIPFGIFWIV). At 242–259 (DKWNEENFFVRACGFSHH) the chain is on the extracellular side. A helical membrane pass occupies residues 260–280 (ILYVYCINICVNATIYFLVGS). Over 281-312 (IRHGKFQKMTLKLILQRAIQGTPEEEGGERGP) the chain is Cytoplasmic.

The protein belongs to the G-protein coupled receptor 1 family. Mas subfamily.

It is found in the membrane. In terms of biological role, orphan receptor. Probably involved in the function of nociceptive neurons. May regulate nociceptor function and/or development, including the sensation or modulation of pain. This chain is Mas-related G-protein coupled receptor member B3 (Mrgprb3), found in Mus musculus (Mouse).